We begin with the raw amino-acid sequence, 180 residues long: Centromere protein M (180 aa).

Component of the CENPA-NAC complex, at least composed of CENPA, CENPC, CENPH, CENPM, CENPN, CENPT and CENPU. The CENPA-NAC complex interacts with the CENPA-CAD complex, composed of CENPI, CENPK, CENPL, CENPO, CENPP, CENPQ, CENPR and CENPS. Isoform 3 is highly expressed in spleen, and intermediately in heart, prostate and ovary. Isoform 3 is highly expressed in resting CD19 B-cells and B-lineage chronic lymphocytic leukemia (B-CLL) cells and weakly expressed in activated B-cells. Isoform 1 is selectively expressed in activated CD19 cells and weakly in resting CD19 B-cells.

Its subcellular location is the nucleus. It is found in the cytoplasm. It localises to the chromosome. The protein localises to the centromere. The protein resides in the kinetochore. Component of the CENPA-NAC (nucleosome-associated) complex, a complex that plays a central role in assembly of kinetochore proteins, mitotic progression and chromosome segregation. The CENPA-NAC complex recruits the CENPA-CAD (nucleosome distal) complex and may be involved in incorporation of newly synthesized CENPA into centromeres. The polypeptide is Centromere protein M (CENPM) (Homo sapiens (Human)).